We begin with the raw amino-acid sequence, 191 residues long: UPF0669 protein C6orf120 homolog (191 aa).

A signal peptide spans 1-30; the sequence is MAAPRGRAAPWTTALLLLLTSQILSPGSCA. N-linked (GlcNAc...) asparagine glycosylation is present at asparagine 53.

The protein belongs to the UPF0669 family.

Its subcellular location is the secreted. Functionally, may be involved in induction of apoptosis in CD4(+) T-cells, but not CD8(+) T-cells or hepatocytes. The polypeptide is UPF0669 protein C6orf120 homolog (Macaca fascicularis (Crab-eating macaque)).